The sequence spans 182 residues: UPF0316 protein BCAH820_3389 (182 aa).

The next 3 membrane-spanning stretches (helical) occupy residues 6 to 26, 32 to 52, and 58 to 78; these read LIFV…ILLV, SAAA…GIVF, and WMNI…GGYI.

It belongs to the UPF0316 family.

It is found in the cell membrane. In Bacillus cereus (strain AH820), this protein is UPF0316 protein BCAH820_3389.